The primary structure comprises 282 residues: Energy-coupling factor transporter ATP-binding protein EcfA2 (282 aa).

Residues 1–234 (MKGSPFEKVA…ADELVALGLD (234 aa)) enclose the ABC transporter domain. 28 to 35 (GHTGSGKS) serves as a coordination point for ATP.

Belongs to the ABC transporter superfamily. Energy-coupling factor EcfA family. As to quaternary structure, forms a stable energy-coupling factor (ECF) transporter complex composed of 2 membrane-embedded substrate-binding proteins (S component), 2 ATP-binding proteins (A component) and 2 transmembrane proteins (T component).

Its subcellular location is the cell membrane. Functionally, ATP-binding (A) component of a common energy-coupling factor (ECF) ABC-transporter complex. Unlike classic ABC transporters this ECF transporter provides the energy necessary to transport a number of different substrates. This Halalkalibacterium halodurans (strain ATCC BAA-125 / DSM 18197 / FERM 7344 / JCM 9153 / C-125) (Bacillus halodurans) protein is Energy-coupling factor transporter ATP-binding protein EcfA2.